The primary structure comprises 238 residues: Opacity protein opA60 (238 aa).

Residue Ala-1 is a signal peptide.

This sequence belongs to the opacity porin family.

The protein localises to the cell outer membrane. In terms of biological role, implicated in a number of adherence functions. OPA proteins are implicated in pathogenesis and are subject to phase variation. The polypeptide is Opacity protein opA60 (opaH) (Neisseria gonorrhoeae).